We begin with the raw amino-acid sequence, 415 residues long: Probable beta-1,4-xylosyltransferase IRX10L (415 aa).

Residue methionine 1 is a topological domain, cytoplasmic. A helical; Signal-anchor for type II membrane protein transmembrane segment spans residues 2 to 22; sequence KLSSCVLIFLLCNTFSSISAF. The Lumenal segment spans residues 23-415; sequence RLSRSQPTER…AGPVADLKPW (393 aa). Asparagine 142 and asparagine 403 each carry an N-linked (GlcNAc...) asparagine glycan.

The protein belongs to the glycosyltransferase 47 family. In terms of tissue distribution, present in the xylem and phloem, and, to a lower extent, in interfascicular cells. Expressed in the root tip, shoot apical meristem (SAM), xylem cells of roots and stems, and in the vasculature of roots, cotyledons and leaves.

It is found in the golgi apparatus membrane. Involved in the synthesis of the hemicellulose glucuronoxylan, a major component of secondary cell walls. Probably involved in the elongation of glucuronoxylan xylosyl backbone. The sequence is that of Probable beta-1,4-xylosyltransferase IRX10L (IRX10L) from Arabidopsis thaliana (Mouse-ear cress).